The sequence spans 73 residues: Protein SlyX homolog (73 aa).

The disordered stretch occupies residues Leu-54 to Tyr-73. Residues Ala-57–Asn-67 show a composition bias toward low complexity.

Belongs to the SlyX family.

The sequence is that of Protein SlyX homolog from Rhodopseudomonas palustris (strain BisA53).